The following is a 785-amino-acid chain: E3 UFM1-protein ligase 1 homolog (785 aa).

The disordered stretch occupies residues 404-483 (GGNASNQLDD…GGGGSNKKSV (80 aa)).

This sequence belongs to the UFL1 family.

E3 UFM1-protein ligase that mediates ufmylation of target proteins. The polypeptide is E3 UFM1-protein ligase 1 homolog (Drosophila willistoni (Fruit fly)).